The chain runs to 637 residues: Probable serine/threonine-protein kinase DDB_G0283065 (637 aa).

Disordered regions lie at residues 36 to 88 and 155 to 234; these read NNNN…KFNR and NSNN…RFNN. The segment covering 53-85 has biased composition (low complexity); the sequence is NNSTTKSIDNNNNNTNNSNSNNNNNDNIKNNNK. A Protein kinase domain is found at 236 to 629; sequence FNDVRVLGKG…NQISTDYDNF (394 aa). Residues 242 to 250 and Lys-265 contribute to the ATP site; that span reads LGKGGFGIV. The active-site Proton acceptor is Asp-479.

This sequence belongs to the protein kinase superfamily. Ser/Thr protein kinase family. GCN2 subfamily.

It catalyses the reaction L-seryl-[protein] + ATP = O-phospho-L-seryl-[protein] + ADP + H(+). It carries out the reaction L-threonyl-[protein] + ATP = O-phospho-L-threonyl-[protein] + ADP + H(+). The polypeptide is Probable serine/threonine-protein kinase DDB_G0283065 (Dictyostelium discoideum (Social amoeba)).